The sequence spans 330 residues: Cobalamin biosynthesis protein CobD (330 aa).

4 helical membrane-spanning segments follow: residues 60–80 (TLVI…PPIV), 153–173 (GIIA…LLGV), 227–247 (LGIV…WKIF), and 308–328 (IVLF…FVLT).

The protein belongs to the CobD/CbiB family.

It localises to the cell membrane. The protein operates within cofactor biosynthesis; adenosylcobalamin biosynthesis. In terms of biological role, converts cobyric acid to cobinamide by the addition of aminopropanol on the F carboxylic group. This Desulfotalea psychrophila (strain LSv54 / DSM 12343) protein is Cobalamin biosynthesis protein CobD.